Reading from the N-terminus, the 198-residue chain is Peptidyl-tRNA hydrolase (198 aa).

Tyr15 serves as a coordination point for tRNA. The active-site Proton acceptor is His20. Phe66, Asn68, and Asn114 together coordinate tRNA.

The protein belongs to the PTH family. In terms of assembly, monomer.

It localises to the cytoplasm. The enzyme catalyses an N-acyl-L-alpha-aminoacyl-tRNA + H2O = an N-acyl-L-amino acid + a tRNA + H(+). Hydrolyzes ribosome-free peptidyl-tRNAs (with 1 or more amino acids incorporated), which drop off the ribosome during protein synthesis, or as a result of ribosome stalling. Functionally, catalyzes the release of premature peptidyl moieties from peptidyl-tRNA molecules trapped in stalled 50S ribosomal subunits, and thus maintains levels of free tRNAs and 50S ribosomes. The sequence is that of Peptidyl-tRNA hydrolase from Cupriavidus metallidurans (strain ATCC 43123 / DSM 2839 / NBRC 102507 / CH34) (Ralstonia metallidurans).